Consider the following 345-residue polypeptide: uncharacterized protein (345 aa).

The protein belongs to the transketolase family. The cofactor is thiamine diphosphate.

This is an uncharacterized protein from Sinorhizobium fredii (strain NBRC 101917 / NGR234).